We begin with the raw amino-acid sequence, 224 residues long: A-factor barrier protein 1 (224 aa).

The N-terminal stretch at 1-25 (MIFAPSFSLIKNILLVSFLISHSFA) is a signal peptide. Asn148, Asn181, and Asn191 each carry an N-linked (GlcNAc...) asparagine glycan. A lipid anchor (GPI-anchor amidated asparagine) is attached at Asn203. A propeptide spans 204-224 (GAHAKSLYFPMALFGIFAVAL) (removed in mature form).

This sequence belongs to the SRP1/TIP1 family. In terms of processing, the GPI-anchor is attached to the protein in the endoplasmic reticulum and serves to target the protein to the cell surface. There, the glucosamine-inositol phospholipid moiety is cleaved off and the GPI-modified mannoprotein is covalently attached via its lipidless GPI glycan remnant to the 1,6-beta-glucan of the outer cell wall layer.

It is found in the secreted. Its subcellular location is the cell wall. The protein localises to the membrane. MATalpha-specific protein that interferes with a-factor, the pheromone secreted by MATa cells. Contributes to mating efficiency. Acts to bind and sequester a-factor rather than to degrade it, and promotes the efficient mating of MATalpha cells by keeping the a-factor concentration at the plasma membrane within the narrow range needed for accurate pheromone gradient detection. In Saccharomyces cerevisiae (strain ATCC 204508 / S288c) (Baker's yeast), this protein is A-factor barrier protein 1.